The chain runs to 605 residues: Apoptosis-inducing factor 3 (605 aa).

The interval 22–45 (KERGKEELSASGKGSPRAYQGNGT) is disordered. Residues 70 to 165 (AAVCHVKDLE…VKIEKEKVYV (96 aa)) form the Rieske domain. [2Fe-2S] cluster is bound by residues Cys109, His111, Cys128, and His131. FAD-binding positions include 201 to 205 (GAGAA), Arg235, Lys240, Val270, Asp467, and Trp514.

The protein belongs to the FAD-dependent oxidoreductase family. In terms of tissue distribution, ubiquitous. Expressed in bone marrow, cerebral cortex, liver, ovary, thymus, thyroid gland and tongue (at protein level).

The protein localises to the mitochondrion. Functionally, induces apoptosis through a caspase dependent pathway. Reduces mitochondrial membrane potential. This chain is Apoptosis-inducing factor 3 (AIFM3), found in Homo sapiens (Human).